We begin with the raw amino-acid sequence, 69 residues long: Putative membrane protein insertion efficiency factor (69 aa).

It belongs to the UPF0161 family.

The protein localises to the cell inner membrane. Could be involved in insertion of integral membrane proteins into the membrane. The protein is Putative membrane protein insertion efficiency factor of Novosphingobium aromaticivorans (strain ATCC 700278 / DSM 12444 / CCUG 56034 / CIP 105152 / NBRC 16084 / F199).